Reading from the N-terminus, the 230-residue chain is MENQPKLNSSKEIIAFLAERFPKCFIAEGEARPLKVGIFQDLVEHLKDETQLSKTQLRSALRLYTSSWRYLYGVKEGAKRVDLNGNDCGELEAEHIAHARTQLAEAKARVQAQRAEQRAKKREAEGDKETSKRPAAKKPNPRRQAPKDGEKRQPRPQKQANQAPRKAPRQNTEKLTPVKDISVLTVGQSLKVNVGSSVMDATVLEIAKEGVRVQLPNGLAMNVRTEHLKF.

Residues 104–176 (AEAKARVQAQ…APRQNTEKLT (73 aa)) are disordered. Over residues 115 to 132 (AEQRAKKREAEGDKETSK) the composition is skewed to basic and acidic residues.

This sequence belongs to the ProQ family.

Its subcellular location is the cytoplasm. In terms of biological role, RNA chaperone with significant RNA binding, RNA strand exchange and RNA duplexing activities. May regulate ProP activity through an RNA-based, post-transcriptional mechanism. This is RNA chaperone ProQ from Proteus mirabilis (strain HI4320).